A 381-amino-acid polypeptide reads, in one-letter code: MWSEGRYDYDRLPRERVPPRSHPSDGYHRVVNVVPKRPPLLDKRPPLLDKRPPLLARPDEGGYSRYYSHVDCRVCDEGRSFSHDRRSGPSHSGDESGYRWLRDDHSTSRQPDYRDMRDGFRRKSFYSSHYSRDRSPHKRDAPFFRESPVGRKDSPHSRSGSSVSSRSYSPERSRTHSFHQSQHRKSSRVGASYKRQNEAIRGRGKERSIQSVKTSRDASPSSSSAVASSKALDKPSRLTEKELAEAESKWANETLEKSDESNLAEMNEFEAGSTAPLFIDQTEEPESNTVDGTELYEDSQLSNRSKAIASKTKEIEQVYRQDCETFGMVVKMLIEKDPSLEKSVQFALRQNLHEIGERCVEELKRFITEYDNSARDFGDPF.

Basic and acidic residues-rich tracts occupy residues 1–28 (MWSE…DGYH), 39–65 (PLLD…GYSR), and 79–121 (RSFS…DGFR). 2 disordered regions span residues 1-65 (MWSE…GYSR) and 79-260 (RSFS…KSDE). Positions 117–123 (RDGFRRK) match the Nuclear localization signal motif. Residue Lys123 forms a Glycyl lysine isopeptide (Lys-Gly) (interchain with G-Cter in SUMO2) linkage. 4 positions are modified to phosphoserine: Ser124, Ser128, Ser147, and Ser154. Residues 130-156 (YSRDRSPHKRDAPFFRESPVGRKDSPH) show a composition bias toward basic and acidic residues. The span at 157–168 (SRSGSSVSSRSY) shows a compositional bias: low complexity. Residues 175–187 (THSFHQSQHRKSS) are compositionally biased toward basic residues. Residue Ser181 is modified to Phosphoserine. Residue Lys194 forms a Glycyl lysine isopeptide (Lys-Gly) (interchain with G-Cter in SUMO2) linkage. Basic and acidic residues predominate over residues 195 to 208 (RQNEAIRGRGKERS). Phosphoserine is present on Ser211. A Glycyl lysine isopeptide (Lys-Gly) (interchain with G-Cter in SUMO2) cross-link involves residue Lys213. Phosphoserine occurs at positions 215 and 219. A compositionally biased stretch (low complexity) spans 217–230 (DASPSSSSAVASSK). Residues 231 to 260 (ALDKPSRLTEKELAEAESKWANETLEKSDE) are compositionally biased toward basic and acidic residues. Residue Lys241 forms a Glycyl lysine isopeptide (Lys-Gly) (interchain with G-Cter in SUMO2) linkage. At Lys249 the chain carries N6-acetyllysine; alternate. A Glycyl lysine isopeptide (Lys-Gly) (interchain with G-Cter in SUMO2); alternate cross-link involves residue Lys249. Position 339 is a phosphoserine (Ser339). Lys342 is covalently cross-linked (Glycyl lysine isopeptide (Lys-Gly) (interchain with G-Cter in SUMO2)).

Homodimer. Component of the HUSH complex; at least composed of TASOR, PPHLN1 and MPHOSPH8. Interacts with SIN3A and HDAC1. May interact with PPL. Ubiquitously expressed. Strong expression in the developing somites and limbs, the embryonic nervous system and the adult brain.

The protein localises to the nucleus. Its subcellular location is the cytoplasm. The protein resides in the chromosome. Its function is as follows. Component of the HUSH complex, a multiprotein complex that mediates epigenetic repression. The HUSH complex is recruited to genomic loci rich in H3K9me3 and is probably required to maintain transcriptional silencing by promoting recruitment of SETDB1, a histone methyltransferase that mediates further deposition of H3K9me3. In the HUSH complex, contributes to the maintenance of the complex at chromatin. Acts as a transcriptional corepressor and regulates the cell cycle, probably via the HUSH complex. The HUSH complex is also involved in the silencing of unintegrated retroviral DNA: some part of the retroviral DNA formed immediately after infection remains unintegrated in the host genome and is transcriptionally repressed. May be involved in epithelial differentiation by contributing to epidermal integrity and barrier formation. The polypeptide is Periphilin-1 (Mus musculus (Mouse)).